A 242-amino-acid polypeptide reads, in one-letter code: HTH-type transcriptional regulator GadW (242 aa).

The HTH araC/xylS-type domain maps to 139–236 (GKVERLISFD…GVTPHQFSQH (98 aa)). 2 consecutive DNA-binding regions (H-T-H motif) follow at residues 156–177 (RDIA…QDEN) and 203–226 (LHTI…RQYY).

As to quaternary structure, homodimer.

Depending on the conditions (growth phase and medium), acts as a positive or negative regulator of gadA and gadBC. Repression occurs directly or via the repression of the expression of gadX. Activation occurs directly by the binding of GadW to the gadA and gadBC promoters. In Escherichia coli O6:H1 (strain CFT073 / ATCC 700928 / UPEC), this protein is HTH-type transcriptional regulator GadW (gadW).